Reading from the N-terminus, the 830-residue chain is Periplasmic nitrate reductase (830 aa).

A signal peptide (tat-type signal) is located at residues 1–31 (MKLSRRDFMKANAAVAAAAAAGMTIPTVAKA). A 4Fe-4S Mo/W bis-MGD-type domain is found at 39 to 95 (IKWDKAPCRFCGTGCGVLVGTQNGRIVASQGDPDSPVNRGLNCIKGYFLPKIMYGKD). [4Fe-4S] cluster contacts are provided by Cys46, Cys49, Cys53, and Cys81. Residues Lys83, Gln150, Asn175, Cys179, 212 to 219 (WGSNMAEM), 243 to 247 (STYEH), 262 to 264 (QTD), Met372, Gln376, Asn482, 508 to 509 (SD), Lys531, Asp558, and 718 to 727 (TGRVLEHWHT) contribute to the Mo-bis(molybdopterin guanine dinucleotide) site. Phe794 provides a ligand contact to substrate. 2 residues coordinate Mo-bis(molybdopterin guanine dinucleotide): Asn802 and Lys819.

It belongs to the prokaryotic molybdopterin-containing oxidoreductase family. NasA/NapA/NarB subfamily. As to quaternary structure, component of the periplasmic nitrate reductase NapAB complex composed of NapA and NapB. It depends on [4Fe-4S] cluster as a cofactor. Mo-bis(molybdopterin guanine dinucleotide) serves as cofactor. Post-translationally, predicted to be exported by the Tat system. The position of the signal peptide cleavage has not been experimentally proven.

It localises to the periplasm. It catalyses the reaction 2 Fe(II)-[cytochrome] + nitrate + 2 H(+) = 2 Fe(III)-[cytochrome] + nitrite + H2O. Functionally, catalytic subunit of the periplasmic nitrate reductase complex NapAB. Receives electrons from NapB and catalyzes the reduction of nitrate to nitrite. The chain is Periplasmic nitrate reductase from Yersinia pseudotuberculosis serotype IB (strain PB1/+).